Here is a 213-residue protein sequence, read N- to C-terminus: KHG/KDPG aldolase (213 aa).

Catalysis depends on glutamate 45, which acts as the Proton acceptor. 3 residues coordinate pyruvate: arginine 49, threonine 73, and lysine 133. The Schiff-base intermediate with substrate role is filled by lysine 133.

The protein belongs to the KHG/KDPG aldolase family. Homotrimer.

The protein localises to the cytoplasm. The enzyme catalyses 2-dehydro-3-deoxy-6-phospho-D-gluconate = D-glyceraldehyde 3-phosphate + pyruvate. The catalysed reaction is (4S)-4-hydroxy-2-oxoglutarate = glyoxylate + pyruvate. It participates in carbohydrate acid metabolism; 2-dehydro-3-deoxy-D-gluconate degradation; D-glyceraldehyde 3-phosphate and pyruvate from 2-dehydro-3-deoxy-D-gluconate: step 2/2. Its pathway is carbohydrate metabolism; glyoxylate and dicarboxylate metabolism. Its function is as follows. Involved in the degradation of glucose via the Entner-Doudoroff pathway. Catalyzes the reversible, stereospecific retro-aldol cleavage of 2-keto-3-deoxy-6-phosphogluconate (KDPG) to pyruvate and D-glyceraldehyde-3-phosphate. In addition to its KDPG aldolase activity, catalyzes the reversible cleavage of 2-keto-4-hydroxyglutarate (KHG) to glyoxylate and pyruvate. The enzyme is stereoselective for the S-enantiomer of KHG. Cleavage of KHG could serve in tricarboxylic acid (TCA) cycle regulation or, when operating in the reverse direction, in the detoxification of glyoxylate. The chain is KHG/KDPG aldolase (eda) from Escherichia coli O157:H7.